Reading from the N-terminus, the 90-residue chain is Probable Fe(2+)-trafficking protein (90 aa).

This sequence belongs to the Fe(2+)-trafficking protein family.

Could be a mediator in iron transactions between iron acquisition and iron-requiring processes, such as synthesis and/or repair of Fe-S clusters in biosynthetic enzymes. This Albidiferax ferrireducens (strain ATCC BAA-621 / DSM 15236 / T118) (Rhodoferax ferrireducens) protein is Probable Fe(2+)-trafficking protein.